Consider the following 455-residue polypeptide: Chromosomal replication initiator protein DnaA (455 aa).

A domain I, interacts with DnaA modulators region spans residues 1-75; sequence MDTNNNIEKE…EILSQNKVGM (75 aa). The segment at 75 to 106 is domain II; sequence MHLAHSVDVRIEVAPKIQINAQANINYKAIKT. The tract at residues 107–321 is domain III, AAA+ region; it reads SVKDSYTFEN…GAIIKISVNA (215 aa). ATP is bound by residues glycine 151, glycine 153, lysine 154, and threonine 155. Residues 322–455 form a domain IV, binds dsDNA region; sequence NLMNAPIDLN…DKKTAFNSSE (134 aa).

This sequence belongs to the DnaA family. In terms of assembly, oligomerizes as a right-handed, spiral filament on DNA at oriC.

Its subcellular location is the cytoplasm. Plays an essential role in the initiation and regulation of chromosomal replication. ATP-DnaA binds to the origin of replication (oriC) to initiate formation of the DNA replication initiation complex once per cell cycle. Binds the DnaA box (a 9 base pair repeat at the origin) and separates the double-stranded (ds)DNA. Forms a right-handed helical filament on oriC DNA; dsDNA binds to the exterior of the filament while single-stranded (ss)DNA is stabiized in the filament's interior. The ATP-DnaA-oriC complex binds and stabilizes one strand of the AT-rich DNA unwinding element (DUE), permitting loading of DNA polymerase. After initiation quickly degrades to an ADP-DnaA complex that is not apt for DNA replication. Binds acidic phospholipids. This Helicobacter pylori (strain P12) protein is Chromosomal replication initiator protein DnaA.